The sequence spans 355 residues: Heterogeneous nuclear ribonucleoprotein D0 (355 aa).

The disordered stretch occupies residues 1-91 (MSEEQFGGDG…SSPRHTEAAA (91 aa)). Residue S2 is modified to N-acetylserine. Residues 11–43 (AAAAATAAVGGSAGEQEGAMVAAAAQGPAAAAG) are compositionally biased toward low complexity. A compositionally biased stretch (gly residues) spans 44–58 (SGSGGGGSAAGGTEG). The segment covering 64-73 (EGAKIDASKN) has biased composition (basic and acidic residues). S71 is subject to Phosphoserine. A Glycyl lysine isopeptide (Lys-Gly) (interchain with G-Cter in SUMO2) cross-link involves residue K72. Phosphoserine is present on residues S80, S82, and S83. RRM domains lie at 97–179 (WKMF…KTKE) and 182–261 (KKIF…MSKE). N6-methyllysine is present on K119. T127 bears the Phosphothreonine mark. K129 is covalently cross-linked (Glycyl lysine isopeptide (Lys-Gly) (interchain with G-Cter in SUMO2)). The residue at position 165 (K165) is an N6-acetyllysine. S190 is modified (phosphoserine). T193 is modified (phosphothreonine). K197 is covalently cross-linked (Glycyl lysine isopeptide (Lys-Gly) (interchain with G-Cter in SUMO2)). N6-acetyllysine occurs at positions 243 and 251. An omega-N-methylarginine mark is found at E261 and Y263. S271 carries the post-translational modification Phosphoserine. 4 positions are modified to omega-N-methylarginine: R272, R278, R280, and R282. At R345 the chain carries Asymmetric dimethylarginine; alternate. Position 345 is a dimethylated arginine; alternate (R345). Position 345 is an omega-N-methylarginine; alternate (R345).

In terms of assembly, identified in a IGF2BP1-dependent mRNP granule complex containing untranslated mRNAs. Part of a complex associated with the FOS mCRD domain and consisting of PABPC1, PAIP1, CSDE1/UNR and SYNCRIP. Interacts with IGF2BP2. Interacts with GTPBP1. Interacts with EIF4G1; the interaction requires RNA. Interacts with EIF3B and RPS3. In terms of processing, methylated by PRMT1, in an insulin-dependent manner. The PRMT1-mediated methylation regulates its phosphorylation. Post-translationally, arg-345 is dimethylated, probably to asymmetric dimethylarginine.

It is found in the nucleus. Its subcellular location is the cytoplasm. Its function is as follows. Binds with high affinity to RNA molecules that contain AU-rich elements (AREs) found within the 3'-UTR of many proto-oncogenes and cytokine mRNAs. Also binds to double- and single-stranded DNA sequences in a specific manner and functions a transcription factor. Each of the RNA-binding domains specifically can bind solely to a single-stranded non-monotonous 5'-UUAG-3' sequence and also weaker to the single-stranded 5'-TTAGGG-3' telomeric DNA repeat. Binds RNA oligonucleotides with 5'-UUAGGG-3' repeats more tightly than the telomeric single-stranded DNA 5'-TTAGGG-3' repeats. Binding of RRM1 to DNA inhibits the formation of DNA quadruplex structure which may play a role in telomere elongation. May be involved in translationally coupled mRNA turnover. Implicated with other RNA-binding proteins in the cytoplasmic deadenylation/translational and decay interplay of the FOS mRNA mediated by the major coding-region determinant of instability (mCRD) domain. May play a role in the regulation of the rhythmic expression of circadian clock core genes. Directly binds to the 3'UTR of CRY1 mRNA and induces CRY1 rhythmic translation. May also be involved in the regulation of PER2 translation. The polypeptide is Heterogeneous nuclear ribonucleoprotein D0 (Hnrnpd) (Mus musculus (Mouse)).